We begin with the raw amino-acid sequence, 403 residues long: N-isopropylammelide isopropyl amidohydrolase (403 aa).

3 residues coordinate Zn(2+): H60, H62, and H217. The active-site Proton donor/acceptor is the H249. D303 serves as a coordination point for Zn(2+).

This sequence belongs to the metallo-dependent hydrolases superfamily. N-acyl-D-amino-acid deacylase family. In terms of assembly, homotetramer. Zn(2+) serves as cofactor.

It is found in the cytoplasm. It carries out the reaction N-isopropylammelide + H2O + H(+) = isopropylamine + cyanurate. It functions in the pathway xenobiotic degradation; atrazine degradation; cyanurate from atrazine: step 3/3. Its activity is regulated as follows. Inhibited by N-ethylammeline, N-hydroxyethylammeline, N-isopropylammeline, ammeline and 2-amino-4hydroxy-1,3,5-s-triazine. Its function is as follows. Transforms N-isopropylammelide to cyanuric acid and isopropylamine. The sequence is that of N-isopropylammelide isopropyl amidohydrolase (atzC) from Pseudomonas sp. (strain ADP).